The chain runs to 120 residues: Cytochrome c oxidase subunit 5 (120 aa).

Ser2 carries the post-translational modification Blocked amino end (Ser). Cys76, His84, Cys99, and Cys102 together coordinate Zn(2+).

It belongs to the cytochrome c oxidase subunit 5B family. As to quaternary structure, component of the cytochrome c oxidase (complex IV, CIV), a multisubunit enzyme composed of a catalytic core of 3 subunits and several supernumerary subunits. The complex exists as a monomer or a dimer and forms supercomplexes (SCs) in the inner mitochondrial membrane with ubiquinol-cytochrome c oxidoreductase (cytochrome b-c1 complex, complex III, CIII). Slime mold cytochrome c oxidase consists of at least seven different polypeptides species, subunits I, II, III, IV, V, VI, and VIIe/s in order of MW.

Its subcellular location is the mitochondrion inner membrane. It participates in energy metabolism; oxidative phosphorylation. In terms of biological role, component of the cytochrome c oxidase, the last enzyme in the mitochondrial electron transport chain which drives oxidative phosphorylation. The respiratory chain contains 3 multisubunit complexes succinate dehydrogenase (complex II, CII), ubiquinol-cytochrome c oxidoreductase (cytochrome b-c1 complex, complex III, CIII) and cytochrome c oxidase (complex IV, CIV), that cooperate to transfer electrons derived from NADH and succinate to molecular oxygen, creating an electrochemical gradient over the inner membrane that drives transmembrane transport and the ATP synthase. Cytochrome c oxidase is the component of the respiratory chain that catalyzes the reduction of oxygen to water. Electrons originating from reduced cytochrome c in the intermembrane space (IMS) are transferred via the dinuclear copper A center (CU(A)) of subunit 2 and heme A of subunit 1 to the active site in subunit 1, a binuclear center (BNC) formed by heme A3 and copper B (CU(B)). The BNC reduces molecular oxygen to 2 water molecules using 4 electrons from cytochrome c in the IMS and 4 protons from the mitochondrial matrix. This chain is Cytochrome c oxidase subunit 5 (cxeA), found in Dictyostelium discoideum (Social amoeba).